A 342-amino-acid chain; its full sequence is N-alpha-acetyl-L-2,4-diaminobutyric acid deacetylase (342 aa).

The disordered stretch occupies residues threonine 103–proline 124.

The protein belongs to the DoeB deacetylase family. Requires Zn(2+) as cofactor.

Its subcellular location is the cytoplasm. It catalyses the reaction (2S)-2-acetamido-4-aminobutanoate + H2O = L-2,4-diaminobutanoate + acetate. Involved in the degradation of ectoine, which allows H.elongata to utilize ectoine as both a carbon and a nitrogen source for growth. Catalyzes the deacetylation of N-alpha-acetyl-L-2,4-diaminobutyrate (N-alpha-Ac-DABA) to yield L-2,4-diaminobutyrate (DABA). The protein is N-alpha-acetyl-L-2,4-diaminobutyric acid deacetylase of Halomonas elongata (strain ATCC 33173 / DSM 2581 / NBRC 15536 / NCIMB 2198 / 1H9).